A 461-amino-acid polypeptide reads, in one-letter code: UDP-N-acetylmuramate--L-alanine ligase (461 aa).

Glycine 112–threonine 118 is a binding site for ATP.

This sequence belongs to the MurCDEF family.

It is found in the cytoplasm. It catalyses the reaction UDP-N-acetyl-alpha-D-muramate + L-alanine + ATP = UDP-N-acetyl-alpha-D-muramoyl-L-alanine + ADP + phosphate + H(+). The protein operates within cell wall biogenesis; peptidoglycan biosynthesis. Its function is as follows. Cell wall formation. The polypeptide is UDP-N-acetylmuramate--L-alanine ligase (Hydrogenovibrio crunogenus (strain DSM 25203 / XCL-2) (Thiomicrospira crunogena)).